Consider the following 179-residue polypeptide: Bifunctional protein PyrR (179 aa).

Substrate is bound by residues 39–40, 101–109, arginine 134, and valine 158; these read RR and DDVLFTGRT. A PRPP-binding motif is present at residues 97–109; it reads VILIDDVLFTGRT.

The protein belongs to the purine/pyrimidine phosphoribosyltransferase family. PyrR subfamily.

The catalysed reaction is UMP + diphosphate = 5-phospho-alpha-D-ribose 1-diphosphate + uracil. Functionally, regulates the transcription of the pyrimidine nucleotide (pyr) operon in response to exogenous pyrimidines. In terms of biological role, also displays a weak uracil phosphoribosyltransferase activity which is not physiologically significant. The sequence is that of Bifunctional protein PyrR from Haemophilus ducreyi (strain 35000HP / ATCC 700724).